Consider the following 234-residue polypeptide: Ankyrin repeat-containing protein C6C3.08 (234 aa).

ANK repeat units follow at residues Asp36–Glu66, Ala70–Pro100, Gly106–Arg135, Gln140–Thr169, and Tyr173–Lys203.

The chain is Ankyrin repeat-containing protein C6C3.08 from Schizosaccharomyces pombe (strain 972 / ATCC 24843) (Fission yeast).